The following is a 276-amino-acid chain: Exosome complex component Rrp42 (276 aa).

This sequence belongs to the RNase PH family. Rrp42 subfamily. As to quaternary structure, component of the archaeal exosome complex. Forms a hexameric ring-like arrangement composed of 3 Rrp41-Rrp42 heterodimers. The hexameric ring associates with a trimer of Rrp4 and/or Csl4 subunits.

The protein localises to the cytoplasm. Non-catalytic component of the exosome, which is a complex involved in RNA degradation. Contributes to the structuring of the Rrp41 active site. The polypeptide is Exosome complex component Rrp42 (Aeropyrum pernix (strain ATCC 700893 / DSM 11879 / JCM 9820 / NBRC 100138 / K1)).